A 213-amino-acid polypeptide reads, in one-letter code: Methylthioribulose-1-phosphate dehydratase (213 aa).

Residues histidine 104 and histidine 106 each coordinate Zn(2+).

The protein belongs to the aldolase class II family. MtnB subfamily. It depends on Zn(2+) as a cofactor.

The catalysed reaction is 5-(methylsulfanyl)-D-ribulose 1-phosphate = 5-methylsulfanyl-2,3-dioxopentyl phosphate + H2O. Its pathway is amino-acid biosynthesis; L-methionine biosynthesis via salvage pathway; L-methionine from S-methyl-5-thio-alpha-D-ribose 1-phosphate: step 2/6. In terms of biological role, catalyzes the dehydration of methylthioribulose-1-phosphate (MTRu-1-P) into 2,3-diketo-5-methylthiopentyl-1-phosphate (DK-MTP-1-P). The chain is Methylthioribulose-1-phosphate dehydratase from Stenotrophomonas maltophilia (strain R551-3).